We begin with the raw amino-acid sequence, 185 residues long: Acireductone dioxygenase (185 aa).

His101, His103, Glu107, and His145 together coordinate Fe(2+). Ni(2+)-binding residues include His101, His103, Glu107, and His145.

The protein belongs to the acireductone dioxygenase (ARD) family. In terms of assembly, monomer. Requires Fe(2+) as cofactor. Ni(2+) is required as a cofactor.

It catalyses the reaction 1,2-dihydroxy-5-(methylsulfanyl)pent-1-en-3-one + O2 = 3-(methylsulfanyl)propanoate + CO + formate + 2 H(+). The catalysed reaction is 1,2-dihydroxy-5-(methylsulfanyl)pent-1-en-3-one + O2 = 4-methylsulfanyl-2-oxobutanoate + formate + 2 H(+). The protein operates within amino-acid biosynthesis; L-methionine biosynthesis via salvage pathway; L-methionine from S-methyl-5-thio-alpha-D-ribose 1-phosphate: step 5/6. Catalyzes 2 different reactions between oxygen and the acireductone 1,2-dihydroxy-3-keto-5-methylthiopentene (DHK-MTPene) depending upon the metal bound in the active site. Fe-containing acireductone dioxygenase (Fe-ARD) produces formate and 2-keto-4-methylthiobutyrate (KMTB), the alpha-ketoacid precursor of methionine in the methionine recycle pathway. Ni-containing acireductone dioxygenase (Ni-ARD) produces methylthiopropionate, carbon monoxide and formate, and does not lie on the methionine recycle pathway. This is Acireductone dioxygenase from Synechococcus sp. (strain RCC307).